Here is a 125-residue protein sequence, read N- to C-terminus: UPF0231 protein HD_1708 (125 aa).

The protein belongs to the UPF0231 family.

The chain is UPF0231 protein HD_1708 from Haemophilus ducreyi (strain 35000HP / ATCC 700724).